The chain runs to 128 residues: uncharacterized protein (128 aa).

The next 2 helical transmembrane spans lie at leucine 33–valine 53 and phenylalanine 61–tyrosine 81. Positions aspartate 99 to phenylalanine 120 are enriched in polar residues. A disordered region spans residues aspartate 99–aspartate 128.

It is found in the membrane. This is an uncharacterized protein from Schizosaccharomyces pombe (strain 972 / ATCC 24843) (Fission yeast).